The primary structure comprises 906 residues: Aconitate hydratase A (906 aa).

Residues 1-2 (MS) constitute a propeptide that is removed on maturation. Cysteine 441, cysteine 507, and cysteine 510 together coordinate [4Fe-4S] cluster.

The protein belongs to the aconitase/IPM isomerase family. As to quaternary structure, monomer. Requires [4Fe-4S] cluster as cofactor.

It carries out the reaction citrate = D-threo-isocitrate. The enzyme catalyses (2S,3R)-3-hydroxybutane-1,2,3-tricarboxylate = 2-methyl-cis-aconitate + H2O. It participates in carbohydrate metabolism; tricarboxylic acid cycle; isocitrate from oxaloacetate: step 2/2. The protein operates within organic acid metabolism; propanoate degradation. Its function is as follows. Involved in the catabolism of short chain fatty acids (SCFA) via the tricarboxylic acid (TCA)(acetyl degradation route) and probably the 2-methylcitrate cycle I (propionate degradation route). Catalyzes the reversible isomerization of citrate to isocitrate via cis-aconitate. Could catalyze the hydration of 2-methyl-cis-aconitate to yield (2R,3S)-2-methylisocitrate. The apo form of AcnA functions as a RNA-binding regulatory protein. The protein is Aconitate hydratase A (acn) of Deinococcus radiodurans (strain ATCC 13939 / DSM 20539 / JCM 16871 / CCUG 27074 / LMG 4051 / NBRC 15346 / NCIMB 9279 / VKM B-1422 / R1).